A 141-amino-acid polypeptide reads, in one-letter code: VLSEDDKNRVRTSVGKNPELPGEYGSETLTRMFAAHPTTKTYFPHFDLSSGSPNLKAHGKKVIDALDNAVEGLDDAVATLSKLSDLHAQKLRVDPANFKILSQCLLSTLANHRNPEFGPAVLASVDKFLCNVSEVLESKYR.

The segment at 1–22 (VLSEDDKNRVRTSVGKNPELPG) is disordered. The Globin domain maps to 1–141 (VLSEDDKNRV…VSEVLESKYR (141 aa)). Position 58 (His58) interacts with O2. His87 provides a ligand contact to heme b.

This sequence belongs to the globin family. As to quaternary structure, heterotetramer of two alpha chains and two beta chains. As to expression, red blood cells.

In terms of biological role, involved in oxygen transport from the lung to the various peripheral tissues. The sequence is that of Hemoglobin subunit alpha (HBA) from Vipera aspis (Aspic viper).